Here is a 192-residue protein sequence, read N- to C-terminus: Secreted phosphoprotein 24 (192 aa).

Positions 1-29 (MGKTPEDFERHTMRSLIFVLALSVFTCSG) are cleaved as a signal peptide. Cystine bridges form between cysteine 92–cysteine 103 and cysteine 116–cysteine 134. A disordered region spans residues 155-192 (TDPRKRGSSRSEAFSSRGRGHSNGDWRKPDYTSPGKVE).

It belongs to the SPP2 family. In terms of processing, multiply phosphorylated at serine residues.

It localises to the secreted. Its function is as follows. Could coordinate an aspect of bone turnover. This Gallus gallus (Chicken) protein is Secreted phosphoprotein 24 (SPP2).